Reading from the N-terminus, the 658-residue chain is Translin-associated factor X-interacting protein 1 (658 aa).

Coiled coils occupy residues 144-184 (EISL…AEEY) and 230-295 (ALKM…LMQL).

As to quaternary structure, interacts with TSNAX.

It localises to the cytoplasm. Its subcellular location is the perinuclear region. Functionally, possible role in spermatogenesis. The chain is Translin-associated factor X-interacting protein 1 from Homo sapiens (Human).